The following is a 147-amino-acid chain: Transthyretin (147 aa).

An N-terminal signal peptide occupies residues 1-20 (MASHRLLLLCLAGLVFVSEA). Cys30 is modified (sulfocysteine). An L-thyroxine-binding site is contributed by Lys35. Phosphoserine is present on Ser72. Glu74 contacts L-thyroxine. Asn118 is a glycosylation site (N-linked (GlcNAc...) asparagine). Position 137 (Ser137) interacts with L-thyroxine.

It belongs to the transthyretin family. As to quaternary structure, homotetramer. Dimer of dimers. In the homotetramer, subunits assemble around a central channel that can accommodate two ligand molecules. Interacts with RBP4. Post-translationally, sulfonation of the reactive cysteine Cys-30 enhances the stability of the native conformation of TTR, avoiding misassembly of the protein leading to amyloid formation.

It localises to the secreted. Functionally, thyroid hormone-binding protein. Probably transports thyroxine from the bloodstream to the brain. This chain is Transthyretin (TTR), found in Macaca fascicularis (Crab-eating macaque).